The following is a 150-amino-acid chain: Late promoter-activating protein (150 aa).

Its function is as follows. Trans-activating factor involved in the late regulation of the P1 lytic growth cycle. May be the transcriptional activator of all late P1 functions. The chain is Late promoter-activating protein (lpa) from Escherichia phage P1 (Bacteriophage P1).